The sequence spans 562 residues: Phosphoenolpyruvate carboxykinase (ATP) (562 aa).

Residue Gly-265 to Thr-272 coordinates ATP.

Belongs to the phosphoenolpyruvate carboxykinase (ATP) family.

It carries out the reaction oxaloacetate + ATP = phosphoenolpyruvate + ADP + CO2. It functions in the pathway carbohydrate biosynthesis; gluconeogenesis. The sequence is that of Phosphoenolpyruvate carboxykinase (ATP) (pckA) from Dictyostelium discoideum (Social amoeba).